The primary structure comprises 348 residues: Phospho-N-acetylmuramoyl-pentapeptide-transferase (348 aa).

The next 10 membrane-spanning stretches (helical) occupy residues 11 to 31, 67 to 87, 92 to 112, 128 to 148, 163 to 183, 198 to 218, 222 to 242, 251 to 271, 276 to 296, and 326 to 346; these read SLIL…IFLG, TAGG…LLPL, TWLF…DDIV, FIVQ…IDKE, IFLG…MLAI, GLAT…AIMS, PLAY…LAFL, VFMG…CAVM, LFLI…ILQV, and VVAR…VAAL.

Belongs to the glycosyltransferase 4 family. MraY subfamily. It depends on Mg(2+) as a cofactor.

The protein localises to the cell inner membrane. The catalysed reaction is UDP-N-acetyl-alpha-D-muramoyl-L-alanyl-gamma-D-glutamyl-meso-2,6-diaminopimeloyl-D-alanyl-D-alanine + di-trans,octa-cis-undecaprenyl phosphate = di-trans,octa-cis-undecaprenyl diphospho-N-acetyl-alpha-D-muramoyl-L-alanyl-D-glutamyl-meso-2,6-diaminopimeloyl-D-alanyl-D-alanine + UMP. It functions in the pathway cell wall biogenesis; peptidoglycan biosynthesis. Catalyzes the initial step of the lipid cycle reactions in the biosynthesis of the cell wall peptidoglycan: transfers peptidoglycan precursor phospho-MurNAc-pentapeptide from UDP-MurNAc-pentapeptide onto the lipid carrier undecaprenyl phosphate, yielding undecaprenyl-pyrophosphoryl-MurNAc-pentapeptide, known as lipid I. This Chlamydia felis (strain Fe/C-56) (Chlamydophila felis) protein is Phospho-N-acetylmuramoyl-pentapeptide-transferase.